Consider the following 60-residue polypeptide: Large ribosomal subunit protein bL32 (60 aa).

A disordered region spans residues 1-60 (MAVQQNKKSPSKRGMHRSHNALTVPGIAVESTTGETHLRHHISPTGFYRGRKVLKTKSEA). Composition is skewed to basic residues over residues 9–19 (SPSKRGMHRSH) and 49–60 (RGRKVLKTKSEA).

This sequence belongs to the bacterial ribosomal protein bL32 family.

The polypeptide is Large ribosomal subunit protein bL32 (Polaromonas sp. (strain JS666 / ATCC BAA-500)).